A 616-amino-acid polypeptide reads, in one-letter code: UPF0329 protein ECU02_1540 (616 aa).

Basic and acidic residues-rich tracts occupy residues 350 to 359 (EREKREESKG) and 369 to 381 (GAGE…KEED). The tract at residues 350–427 (EREKREESKG…RKGDGHHYKI (78 aa)) is disordered. Over residues 382-396 (GKEEEGVEAEEEESA) the composition is skewed to acidic residues. A compositionally biased stretch (basic residues) spans 408-427 (ARRKKSLKGKRKGDGHHYKI).

The protein belongs to the UPF0329 family.

The sequence is that of UPF0329 protein ECU02_1540 from Encephalitozoon cuniculi (strain GB-M1) (Microsporidian parasite).